Here is a 586-residue protein sequence, read N- to C-terminus: Dolichyl-diphosphooligosaccharide--protein glycosyltransferase subunit 1 (586 aa).

A signal peptide spans 1 to 15 (MRLLFAIALLGAVFA). Over 16 to 421 (EDAWKAANVD…EFEFVDMLRE (406 aa)) the chain is Lumenal. The chain crosses the membrane as a helical span at residues 422-442 (PLLASAFFFSLFFVIIVYSRF). Residues 443 to 586 (DFTISSDPAK…NRADSVLASI (144 aa)) are Cytoplasmic-facing.

The protein belongs to the OST1 family. In terms of assembly, component of the oligosaccharyltransferase (OST) complex.

The protein resides in the endoplasmic reticulum membrane. Its subcellular location is the cytoplasmic granule. It participates in protein modification; protein glycosylation. Its function is as follows. Subunit of the oligosaccharyl transferase (OST) complex that catalyzes the initial transfer of a defined glycan (Glc(3)Man(9)GlcNAc(2) in eukaryotes) from the lipid carrier dolichol-pyrophosphate to an asparagine residue within an Asn-X-Ser/Thr consensus motif in nascent polypeptide chains, the first step in protein N-glycosylation. N-glycosylation occurs cotranslationally and the complex associates with the Sec61 complex at the channel-forming translocon complex that mediates protein translocation across the endoplasmic reticulum (ER). All subunits are required for a maximal enzyme activity. This is Dolichyl-diphosphooligosaccharide--protein glycosyltransferase subunit 1 from Caenorhabditis elegans.